The sequence spans 213 residues: Large ribosomal subunit protein uL4 (213 aa).

The tract at residues T51–G90 is disordered. Basic residues predominate over residues G63 to R75.

Belongs to the universal ribosomal protein uL4 family. As to quaternary structure, part of the 50S ribosomal subunit.

Its function is as follows. One of the primary rRNA binding proteins, this protein initially binds near the 5'-end of the 23S rRNA. It is important during the early stages of 50S assembly. It makes multiple contacts with different domains of the 23S rRNA in the assembled 50S subunit and ribosome. Functionally, forms part of the polypeptide exit tunnel. The protein is Large ribosomal subunit protein uL4 of Malacoplasma penetrans (strain HF-2) (Mycoplasma penetrans).